The sequence spans 1088 residues: Exportin-T (1088 aa).

The segment covering 435 to 503 has biased composition (low complexity); sequence KNNNNKNKNT…VKNANNIKNN (69 aa). Disordered regions lie at residues 435 to 513 and 1059 to 1088; these read KNNN…DDDD and LNNNNNINNNNNNINNNGHTNGNGVNKNGH.

Belongs to the exportin family.

The protein localises to the nucleus. Its subcellular location is the cytoplasm. Mediates the nuclear export of aminoacylated tRNAs. The chain is Exportin-T (xpot) from Dictyostelium discoideum (Social amoeba).